Consider the following 145-residue polypeptide: Large ribosomal subunit protein uL11 (145 aa).

This sequence belongs to the universal ribosomal protein uL11 family. In terms of assembly, part of the ribosomal stalk of the 50S ribosomal subunit. Interacts with L10 and the large rRNA to form the base of the stalk. L10 forms an elongated spine to which L12 dimers bind in a sequential fashion forming a multimeric L10(L12)X complex. In terms of processing, one or more lysine residues are methylated.

Functionally, forms part of the ribosomal stalk which helps the ribosome interact with GTP-bound translation factors. The polypeptide is Large ribosomal subunit protein uL11 (Rickettsia massiliae (strain Mtu5)).